We begin with the raw amino-acid sequence, 91 residues long: MTNQNQSQTQTTQTVEKVSSRQKKKKRVCSFCVERIYDIDYKDVNRLKKFLTERGKIMPRRTTGNCARHQRQLTRAIKRARILALLPFIVE.

Residues 1 to 14 are compositionally biased toward low complexity; the sequence is MTNQNQSQTQTTQT. The tract at residues 1–24 is disordered; the sequence is MTNQNQSQTQTTQTVEKVSSRQKK.

It belongs to the bacterial ribosomal protein bS18 family. In terms of assembly, part of the 30S ribosomal subunit. Forms a tight heterodimer with protein bS6.

Binds as a heterodimer with protein bS6 to the central domain of the 16S rRNA, where it helps stabilize the platform of the 30S subunit. The chain is Small ribosomal subunit protein bS18 from Caldicellulosiruptor saccharolyticus (strain ATCC 43494 / DSM 8903 / Tp8T 6331).